Reading from the N-terminus, the 408-residue chain is Serine/threonine transporter SstT (408 aa).

9 helical membrane passes run 11-31 (LANGSLVLQILVGIIAGVALA), 43-63 (FLGSLFVGALKAIAPILVFIL), 82-102 (IVVLYLLGTFAAALTAVILSM), 141-161 (ALMTGNYIGILAWGVGLGLAL), 192-212 (IGIFGLVAATFAETGFAAIAG), 216-236 (LLAVLLGAMAFIALIINPLIV), 290-310 (IPLGATINMGGAAITITVLTL), 316-336 (LGIQVDLLTALLLSVVAAISA), and 363-383 (VAMQVVAVGFIIGVIQDAAET).

The protein belongs to the dicarboxylate/amino acid:cation symporter (DAACS) (TC 2.A.23) family.

It is found in the cell inner membrane. The enzyme catalyses L-serine(in) + Na(+)(in) = L-serine(out) + Na(+)(out). It catalyses the reaction L-threonine(in) + Na(+)(in) = L-threonine(out) + Na(+)(out). In terms of biological role, involved in the import of serine and threonine into the cell, with the concomitant import of sodium (symport system). This is Serine/threonine transporter SstT from Shewanella oneidensis (strain ATCC 700550 / JCM 31522 / CIP 106686 / LMG 19005 / NCIMB 14063 / MR-1).